The sequence spans 103 residues: Small ribosomal subunit protein uS10 (103 aa).

The protein belongs to the universal ribosomal protein uS10 family. Part of the 30S ribosomal subunit.

Its function is as follows. Involved in the binding of tRNA to the ribosomes. The chain is Small ribosomal subunit protein uS10 from Picrophilus torridus (strain ATCC 700027 / DSM 9790 / JCM 10055 / NBRC 100828 / KAW 2/3).